Consider the following 166-residue polypeptide: Ribosome maturation factor RimM (166 aa).

The PRC barrel domain occupies 91 to 163; sequence DDGFYDHELE…TCVITPPEGL (73 aa).

This sequence belongs to the RimM family. Binds ribosomal protein uS19.

It localises to the cytoplasm. An accessory protein needed during the final step in the assembly of 30S ribosomal subunit, possibly for assembly of the head region. Essential for efficient processing of 16S rRNA. May be needed both before and after RbfA during the maturation of 16S rRNA. It has affinity for free ribosomal 30S subunits but not for 70S ribosomes. This chain is Ribosome maturation factor RimM, found in Corynebacterium diphtheriae (strain ATCC 700971 / NCTC 13129 / Biotype gravis).